Consider the following 427-residue polypeptide: 3-phosphoshikimate 1-carboxyvinyltransferase (427 aa).

The 3-phosphoshikimate site is built by Lys20, Ser21, and Arg25. Lys20 is a phosphoenolpyruvate binding site. The phosphoenolpyruvate site is built by Gly92 and Arg120. 3-phosphoshikimate contacts are provided by Ser166, Gln168, Asp312, and Lys339. Gln168 provides a ligand contact to phosphoenolpyruvate. Residue Asp312 is the Proton acceptor of the active site. Phosphoenolpyruvate contacts are provided by Arg343 and Arg385.

The protein belongs to the EPSP synthase family. As to quaternary structure, monomer.

The protein resides in the cytoplasm. The catalysed reaction is 3-phosphoshikimate + phosphoenolpyruvate = 5-O-(1-carboxyvinyl)-3-phosphoshikimate + phosphate. It functions in the pathway metabolic intermediate biosynthesis; chorismate biosynthesis; chorismate from D-erythrose 4-phosphate and phosphoenolpyruvate: step 6/7. Its function is as follows. Catalyzes the transfer of the enolpyruvyl moiety of phosphoenolpyruvate (PEP) to the 5-hydroxyl of shikimate-3-phosphate (S3P) to produce enolpyruvyl shikimate-3-phosphate and inorganic phosphate. The protein is 3-phosphoshikimate 1-carboxyvinyltransferase of Streptococcus uberis (strain ATCC BAA-854 / 0140J).